Consider the following 407-residue polypeptide: Methylenetetrahydrofolate--tRNA-(uracil-5-)-methyltransferase TrmFO (407 aa).

9 to 14 (GAGLAG) serves as a coordination point for FAD.

It belongs to the MnmG family. TrmFO subfamily. FAD is required as a cofactor.

The protein localises to the cytoplasm. The catalysed reaction is uridine(54) in tRNA + (6R)-5,10-methylene-5,6,7,8-tetrahydrofolate + NADH + H(+) = 5-methyluridine(54) in tRNA + (6S)-5,6,7,8-tetrahydrofolate + NAD(+). It catalyses the reaction uridine(54) in tRNA + (6R)-5,10-methylene-5,6,7,8-tetrahydrofolate + NADPH + H(+) = 5-methyluridine(54) in tRNA + (6S)-5,6,7,8-tetrahydrofolate + NADP(+). Functionally, catalyzes the folate-dependent formation of 5-methyl-uridine at position 54 (M-5-U54) in all tRNAs. In Lactobacillus helveticus (strain DPC 4571), this protein is Methylenetetrahydrofolate--tRNA-(uracil-5-)-methyltransferase TrmFO.